Reading from the N-terminus, the 151-residue chain is Prolamin PPROL 14P (151 aa).

The first 19 residues, methionine 1 to alanine 19, serve as a signal peptide directing secretion. Position 20 is a pyrrolidone carboxylic acid (glutamine 20).

Belongs to the prolamin family.

It is found in the vacuole. The protein localises to the aleurone grain. Seed storage protein; serves as a source of nitrogen, carbon and sulfur for the young developing seedling. The protein is Prolamin PPROL 14P (PROLM20) of Oryza sativa subsp. japonica (Rice).